A 540-amino-acid chain; its full sequence is Chaperonin GroEL (540 aa).

ATP is bound by residues 29–32, 86–90, Gly-413, 476–478, and Asp-492; these read TLGP, DGTTT, and NAA.

Belongs to the chaperonin (HSP60) family. As to quaternary structure, forms a cylinder of 14 subunits composed of two heptameric rings stacked back-to-back. Interacts with the co-chaperonin GroES.

It is found in the cytoplasm. It catalyses the reaction ATP + H2O + a folded polypeptide = ADP + phosphate + an unfolded polypeptide.. Its function is as follows. Together with its co-chaperonin GroES, plays an essential role in assisting protein folding. The GroEL-GroES system forms a nano-cage that allows encapsulation of the non-native substrate proteins and provides a physical environment optimized to promote and accelerate protein folding. The chain is Chaperonin GroEL from Streptococcus gordonii (strain Challis / ATCC 35105 / BCRC 15272 / CH1 / DL1 / V288).